We begin with the raw amino-acid sequence, 196 residues long: Translation initiation factor IF-3 (196 aa).

It belongs to the IF-3 family. Monomer.

It localises to the cytoplasm. Its function is as follows. IF-3 binds to the 30S ribosomal subunit and shifts the equilibrium between 70S ribosomes and their 50S and 30S subunits in favor of the free subunits, thus enhancing the availability of 30S subunits on which protein synthesis initiation begins. The polypeptide is Translation initiation factor IF-3 (Wigglesworthia glossinidia brevipalpis).